The primary structure comprises 482 residues: UDP-N-acetylmuramate--L-alanine ligase (482 aa).

129 to 135 lines the ATP pocket; sequence GTHGKTT.

Belongs to the MurCDEF family.

It is found in the cytoplasm. The catalysed reaction is UDP-N-acetyl-alpha-D-muramate + L-alanine + ATP = UDP-N-acetyl-alpha-D-muramoyl-L-alanine + ADP + phosphate + H(+). It functions in the pathway cell wall biogenesis; peptidoglycan biosynthesis. Cell wall formation. This chain is UDP-N-acetylmuramate--L-alanine ligase, found in Acinetobacter baumannii (strain AB307-0294).